The chain runs to 29 residues: GIPICGETCTIGTCNTPGCTCSWPVCTRD.

The segment at residues 1–29 (GIPICGETCTIGTCNTPGCTCSWPVCTRD) is a cross-link (cyclopeptide (Gly-Asp)). 3 cysteine pairs are disulfide-bonded: cysteine 5/cysteine 19, cysteine 9/cysteine 21, and cysteine 14/cysteine 26.

Post-translationally, this is a cyclic peptide. Contains 3 disulfide bonds.

In terms of biological role, probably participates in a plant defense mechanism (Potential). Binds to and induces leakage in phospholipd membranes, particularly ones containing 1-palmitoyl-2-oleophosphatidylethanolamine (POPE). The sequence is that of Cyclotide mech-7 from Melicytus chathamicus (Chatham Island mahoe).